Here is a 751-residue protein sequence, read N- to C-terminus: Ribosome biogenesis protein ERB1 (751 aa).

2 disordered regions span residues M1–P140 and S289–D336. 2 stretches are compositionally biased toward acidic residues: residues L34 to D92 and I119 to T129. A compositionally biased stretch (pro residues) spans S294–P305. Residues E323–D336 show a composition bias toward basic and acidic residues. 6 WD repeats span residues H410–R449, P536–K580, I582–Q621, P622–K661, Y665–T704, and T720–S751.

Belongs to the WD repeat BOP1/ERB1 family. Component of the NOP7 complex, composed of ERB1, NOP7 and YTM1. The complex is held together by ERB1, which interacts with NOP7 via its N-terminal domain and with YTM1 via a high-affinity interaction between the seven-bladed beta-propeller domains of the 2 proteins. The NOP7 complex associates with the 66S pre-ribosome.

It is found in the nucleus. The protein resides in the nucleolus. Its subcellular location is the nucleoplasm. In terms of biological role, component of the NOP7 complex, which is required for maturation of the 25S and 5.8S ribosomal RNAs and formation of the 60S ribosome. This Coprinopsis cinerea (strain Okayama-7 / 130 / ATCC MYA-4618 / FGSC 9003) (Inky cap fungus) protein is Ribosome biogenesis protein ERB1.